The primary structure comprises 428 residues: Cytochrome c biogenesis protein CcsB (428 aa).

Transmembrane regions (helical) follow at residues 14–34 (LRFAILLIIFIAISSGVGTFI), 72–92 (SNWFLFSLILLCISLAACSFR), and 162–182 (LGPIIVHIGLIILLIGSAYGN).

The protein belongs to the Ccs1/CcsB family. As to quaternary structure, may interact with CcsA.

Its subcellular location is the cellular thylakoid membrane. Required during biogenesis of c-type cytochromes (cytochrome c6 and cytochrome f) at the step of heme attachment. The protein is Cytochrome c biogenesis protein CcsB of Prochlorococcus marinus subsp. pastoris (strain CCMP1986 / NIES-2087 / MED4).